Here is a 531-residue protein sequence, read N- to C-terminus: Poly(A)-specific ribonuclease PNLDC1 (531 aa).

Mg(2+) contacts are provided by Asp28, Glu30, Asp271, and Asp365. The chain crosses the membrane as a helical span at residues Ile506–Leu526.

Belongs to the CAF1 family. It depends on Mg(2+) as a cofactor. As to expression, specifically expressed in embryonic stem cells. Highly expressed in testis.

Its subcellular location is the endoplasmic reticulum membrane. It carries out the reaction Exonucleolytic cleavage of poly(A) to 5'-AMP.. 3'-exoribonuclease that has a preference for poly(A) tails of mRNAs, thereby efficiently degrading poly(A) tails. Exonucleolytic degradation of the poly(A) tail is often the first step in the decay of eukaryotic mRNAs and is also used to silence certain maternal mRNAs translationally during oocyte maturation and early embryonic development. May act as a regulator of multipotency in embryonic stem cells. Is a critical factor for proper spermatogenesis, involved in pre-piRNAs processing to generate mature piRNAs. This chain is Poly(A)-specific ribonuclease PNLDC1, found in Mus musculus (Mouse).